The chain runs to 289 residues: (+)-kolavelool synthase (289 aa).

This sequence belongs to the diterpene synthase family.

The enzyme catalyses (+)-kolavenyl diphosphate + H2O = (+)-kolavelool + diphosphate. Functionally, involved in the biosynthesis of (+)-O-methylkolavelool. Catalyzes the biosynthesis of (+)-kolavelool from (+)-kolavenyl diphosphate via the release of the diphosphate moiety through the nucleophilic addition of a water molecule. The polypeptide is (+)-kolavelool synthase (Herpetosiphon aurantiacus (strain ATCC 23779 / DSM 785 / 114-95)).